The primary structure comprises 157 residues: 2-C-methyl-D-erythritol 2,4-cyclodiphosphate synthase (157 aa).

A divalent metal cation contacts are provided by Asp8 and His10. 4-CDP-2-C-methyl-D-erythritol 2-phosphate is bound by residues 8–10 (DVH) and 34–35 (HS). A divalent metal cation is bound at residue His42. Residues 56–58 (DIG), 132–135 (TTNE), and Arg142 each bind 4-CDP-2-C-methyl-D-erythritol 2-phosphate.

It belongs to the IspF family. In terms of assembly, homotrimer. Requires a divalent metal cation as cofactor.

The catalysed reaction is 4-CDP-2-C-methyl-D-erythritol 2-phosphate = 2-C-methyl-D-erythritol 2,4-cyclic diphosphate + CMP. The protein operates within isoprenoid biosynthesis; isopentenyl diphosphate biosynthesis via DXP pathway; isopentenyl diphosphate from 1-deoxy-D-xylulose 5-phosphate: step 4/6. Its function is as follows. Involved in the biosynthesis of isopentenyl diphosphate (IPP) and dimethylallyl diphosphate (DMAPP), two major building blocks of isoprenoid compounds. Catalyzes the conversion of 4-diphosphocytidyl-2-C-methyl-D-erythritol 2-phosphate (CDP-ME2P) to 2-C-methyl-D-erythritol 2,4-cyclodiphosphate (ME-CPP) with a corresponding release of cytidine 5-monophosphate (CMP). This chain is 2-C-methyl-D-erythritol 2,4-cyclodiphosphate synthase, found in Pelodictyon phaeoclathratiforme (strain DSM 5477 / BU-1).